A 219-amino-acid polypeptide reads, in one-letter code: Vesicle-associated membrane protein 721 (219 aa).

Topologically, residues 1–196 (MAQQSLIYSF…MWLQNMKIKL (196 aa)) are cytoplasmic. The Longin domain occupies 10-114 (FVARGTVILV…SLNKEFGSKL (105 aa)). Residues 130–190 (KLAKVKAQVS…TQMRRKMWLQ (61 aa)) enclose the v-SNARE coiled-coil homology domain. Residues 197–217 (IVLAIIIALILIIVLSVCHGF) form a helical; Anchor for type IV membrane protein membrane-spanning segment. At 218-219 (KC) the chain is on the vesicular side.

This sequence belongs to the synaptobrevin family. Expressed in flowers, leaves, stems and roots.

It is found in the cell membrane. Its subcellular location is the early endosome membrane. Involved in the targeting and/or fusion of transport vesicles to their target membrane. The sequence is that of Vesicle-associated membrane protein 721 from Arabidopsis thaliana (Mouse-ear cress).